The primary structure comprises 95 residues: Acyl carrier protein AcpXL (95 aa).

In terms of domain architecture, Carrier spans 4–90; the sequence is TATFDKVADI…NLCAKIDELR (87 aa). Serine 39 carries the O-(pantetheine 4'-phosphoryl)serine modification.

4'-phosphopantetheine is transferred from CoA to a specific serine of apo-ACP by AcpS. This modification is essential for activity because fatty acids are bound in thioester linkage to the sulfhydryl of the prosthetic group.

The protein resides in the cytoplasm. It functions in the pathway glycolipid biosynthesis; KDO(2)-lipid A biosynthesis. In terms of biological role, carrier of the growing fatty acid chain in fatty acid biosynthesis. Is involved in the transfer of long hydroxylated fatty acids to lipid A. The chain is Acyl carrier protein AcpXL (acpXL) from Rhizobium meliloti (strain 1021) (Ensifer meliloti).